A 507-amino-acid polypeptide reads, in one-letter code: Bifunctional purine biosynthesis protein PurH (507 aa).

Residues 1-144 (MKRALLSVSD…KNSDSVWAVV (144 aa)) form the MGS-like domain.

This sequence belongs to the PurH family.

It carries out the reaction (6R)-10-formyltetrahydrofolate + 5-amino-1-(5-phospho-beta-D-ribosyl)imidazole-4-carboxamide = 5-formamido-1-(5-phospho-D-ribosyl)imidazole-4-carboxamide + (6S)-5,6,7,8-tetrahydrofolate. It catalyses the reaction IMP + H2O = 5-formamido-1-(5-phospho-D-ribosyl)imidazole-4-carboxamide. The protein operates within purine metabolism; IMP biosynthesis via de novo pathway; 5-formamido-1-(5-phospho-D-ribosyl)imidazole-4-carboxamide from 5-amino-1-(5-phospho-D-ribosyl)imidazole-4-carboxamide (10-formyl THF route): step 1/1. It functions in the pathway purine metabolism; IMP biosynthesis via de novo pathway; IMP from 5-formamido-1-(5-phospho-D-ribosyl)imidazole-4-carboxamide: step 1/1. This Lacticaseibacillus casei (strain BL23) (Lactobacillus casei) protein is Bifunctional purine biosynthesis protein PurH.